The chain runs to 61 residues: U-poneritoxin(01)-Om5b (61 aa).

An N-terminal signal peptide occupies residues 1–23 (MKLSALSLAFAIILMMTIMYTKA). Residues 24–41 (DADASADAEADADAEAEA) constitute a propeptide that is removed on maturation. Glutamine 59 carries the glutamine amide modification.

It belongs to the formicidae venom precursor-01 superfamily. Truncated sequences of this peptide have also been found in the venom. It is possible they have been cleaved in the venom. As to expression, expressed by the venom gland.

The protein localises to the secreted. Its function is as follows. Acidic peptide with potent hemolytic activities. It also shows low antimicrobial activities against E.coli (MIC=50uM), as well as histamine-releasing activity (28.3% at 10 uM). Does not have activity against S.aureus, and S.cerevisiae. This chain is U-poneritoxin(01)-Om5b, found in Odontomachus monticola (Trap-jaw ant).